Here is a 166-residue protein sequence, read N- to C-terminus: Large ribosomal subunit protein uL10 (166 aa).

Belongs to the universal ribosomal protein uL10 family. In terms of assembly, part of the ribosomal stalk of the 50S ribosomal subunit. The N-terminus interacts with L11 and the large rRNA to form the base of the stalk. The C-terminus forms an elongated spine to which L12 dimers bind in a sequential fashion forming a multimeric L10(L12)X complex.

Forms part of the ribosomal stalk, playing a central role in the interaction of the ribosome with GTP-bound translation factors. In Ureaplasma urealyticum serovar 10 (strain ATCC 33699 / Western), this protein is Large ribosomal subunit protein uL10.